The chain runs to 397 residues: Probable peptidoglycan glycosyltransferase FtsW (397 aa).

Over 1–30 the chain is Cytoplasmic; it reads MYGLEMLEKIKLEYDKWACLTPKNSLYDRT. A helical transmembrane segment spans residues 31–51; the sequence is LVWLFLSLLMIGFIMVTSASI. The Periplasmic segment spans residues 52–61; it reads PVSTRLNNDP. A helical membrane pass occupies residues 62 to 82; sequence FHFAIRDSIYLACSLLAFAFV. Over 83-94 the chain is Cytoplasmic; that stretch reads VKIPMRNWEKYN. Residues 95 to 115 form a helical membrane-spanning segment; the sequence is VPLFLLSLLFLASVLIFGRSV. The Periplasmic segment spans residues 116-126; the sequence is NGSIRWIQLGP. A helical transmembrane segment spans residues 127-146; the sequence is INFQPAELSKLAIICYFSSF. Over 147 to 158 the chain is Cytoplasmic; it reads YVRKYDEMRNRS. A run of 2 helical transmembrane segments spans residues 159-179 and 180-200; these read ASVI…LLQP and DLGS…IMGA. K201 is a topological domain (cytoplasmic). Residues 202–222 form a helical membrane-spanning segment; sequence VMQFLLLIVTASVSFILLVLT. At 223–280 the chain is on the periplasmic side; sequence SEYRLKRVTSFLDPFADAYGDGFQLSNAQMAFGQGQLWGQGLGNSVQKLEYLPEAHTD. A helical transmembrane segment spans residues 281–301; sequence FVMAVVAEEFGFIGIIFMVVL. Over 302 to 325 the chain is Cytoplasmic; that stretch reads LLCLSFRAIKISRDALKLEARFRG. The chain crosses the membrane as a helical span at residues 326–346; it reads FFAFGVAIWVFLQGSVNLGVA. Topologically, residues 347–356 are periplasmic; the sequence is SGALPTKGLT. Residues 357 to 377 form a helical membrane-spanning segment; that stretch reads FPLVSYGGSSLVIMSVAIAIL. Topologically, residues 378–397 are cytoplasmic; that stretch reads LRIDYENRLTRVGHAQIKEP.

The protein belongs to the SEDS family. FtsW subfamily.

The protein localises to the cell inner membrane. It carries out the reaction [GlcNAc-(1-&gt;4)-Mur2Ac(oyl-L-Ala-gamma-D-Glu-L-Lys-D-Ala-D-Ala)](n)-di-trans,octa-cis-undecaprenyl diphosphate + beta-D-GlcNAc-(1-&gt;4)-Mur2Ac(oyl-L-Ala-gamma-D-Glu-L-Lys-D-Ala-D-Ala)-di-trans,octa-cis-undecaprenyl diphosphate = [GlcNAc-(1-&gt;4)-Mur2Ac(oyl-L-Ala-gamma-D-Glu-L-Lys-D-Ala-D-Ala)](n+1)-di-trans,octa-cis-undecaprenyl diphosphate + di-trans,octa-cis-undecaprenyl diphosphate + H(+). Its pathway is cell wall biogenesis; peptidoglycan biosynthesis. Its function is as follows. Peptidoglycan polymerase that is essential for cell division. The protein is Probable peptidoglycan glycosyltransferase FtsW of Haemophilus ducreyi (strain 35000HP / ATCC 700724).